A 180-amino-acid chain; its full sequence is NAD(P)H-quinone oxidoreductase subunit I, chloroplastic (180 aa).

4Fe-4S ferredoxin-type domains lie at 55 to 84 (GRIHFELDKCIACEVCVRVCPIDLPVVDWR) and 95 to 124 (LNYSIDFGICIFCGNCVEYCPTNCLSMTEE). [4Fe-4S] cluster-binding residues include cysteine 64, cysteine 67, cysteine 70, cysteine 74, cysteine 104, cysteine 107, cysteine 110, and cysteine 114.

The protein belongs to the complex I 23 kDa subunit family. NDH is composed of at least 16 different subunits, 5 of which are encoded in the nucleus. [4Fe-4S] cluster is required as a cofactor.

It is found in the plastid. It localises to the chloroplast thylakoid membrane. The catalysed reaction is a plastoquinone + NADH + (n+1) H(+)(in) = a plastoquinol + NAD(+) + n H(+)(out). It catalyses the reaction a plastoquinone + NADPH + (n+1) H(+)(in) = a plastoquinol + NADP(+) + n H(+)(out). In terms of biological role, NDH shuttles electrons from NAD(P)H:plastoquinone, via FMN and iron-sulfur (Fe-S) centers, to quinones in the photosynthetic chain and possibly in a chloroplast respiratory chain. The immediate electron acceptor for the enzyme in this species is believed to be plastoquinone. Couples the redox reaction to proton translocation, and thus conserves the redox energy in a proton gradient. The polypeptide is NAD(P)H-quinone oxidoreductase subunit I, chloroplastic (Chloranthus spicatus (Chulantree)).